Reading from the N-terminus, the 335-residue chain is RNA 3'-terminal phosphate cyclase (335 aa).

Residues Q101 and 282 to 285 (HMGD) contribute to the ATP site. The Tele-AMP-histidine intermediate role is filled by H306.

It belongs to the RNA 3'-terminal cyclase family. Type 1 subfamily.

Its subcellular location is the cytoplasm. It catalyses the reaction a 3'-end 3'-phospho-ribonucleotide-RNA + ATP = a 3'-end 2',3'-cyclophospho-ribonucleotide-RNA + AMP + diphosphate. Catalyzes the conversion of 3'-phosphate to a 2',3'-cyclic phosphodiester at the end of RNA. The mechanism of action of the enzyme occurs in 3 steps: (A) adenylation of the enzyme by ATP; (B) transfer of adenylate to an RNA-N3'P to produce RNA-N3'PP5'A; (C) and attack of the adjacent 2'-hydroxyl on the 3'-phosphorus in the diester linkage to produce the cyclic end product. The biological role of this enzyme is unknown but it is likely to function in some aspects of cellular RNA processing. This Sulfolobus acidocaldarius (strain ATCC 33909 / DSM 639 / JCM 8929 / NBRC 15157 / NCIMB 11770) protein is RNA 3'-terminal phosphate cyclase.